Reading from the N-terminus, the 101-residue chain is NADH-quinone oxidoreductase subunit K (101 aa).

The next 3 membrane-spanning stretches (helical) occupy residues 4–24, 30–50, and 62–82; these read LGHLLALGAVLFCISLAGIFL, IVLLMSIELMLLAVNVNFIAF, and FVFFILTVAAAEAAIGLAILV.

It belongs to the complex I subunit 4L family. NDH-1 is composed of 14 different subunits. Subunits NuoA, H, J, K, L, M, N constitute the membrane sector of the complex.

The protein localises to the cell inner membrane. The catalysed reaction is a quinone + NADH + 5 H(+)(in) = a quinol + NAD(+) + 4 H(+)(out). Functionally, NDH-1 shuttles electrons from NADH, via FMN and iron-sulfur (Fe-S) centers, to quinones in the respiratory chain. The immediate electron acceptor for the enzyme in this species is believed to be ubiquinone. Couples the redox reaction to proton translocation (for every two electrons transferred, four hydrogen ions are translocated across the cytoplasmic membrane), and thus conserves the redox energy in a proton gradient. This chain is NADH-quinone oxidoreductase subunit K, found in Xylella fastidiosa (strain Temecula1 / ATCC 700964).